A 246-amino-acid chain; its full sequence is 2-deoxyglucose-6-phosphate phosphatase 2 (246 aa).

Asp-83 (nucleophile) is an active-site residue. Mg(2+) is bound at residue Asp-83. Substrate-binding positions include Asp-83, Glu-92, and 146 to 149; that span reads DVKN. Mg(2+) is bound at residue Asp-183.

Belongs to the HAD-like hydrolase superfamily. DOG/GPP family. The cofactor is Mg(2+).

The catalysed reaction is 2-deoxy-D-glucose 6-phosphate + H2O = 2-deoxy-D-glucose + phosphate. Phosphatase that is active on 2-deoxy-D-glucose 6-phosphate (2-DOG-6P), but not very active on fructose-1-P. This is 2-deoxyglucose-6-phosphate phosphatase 2 from Saccharomyces cerevisiae (strain ATCC 204508 / S288c) (Baker's yeast).